The sequence spans 320 residues: Malate dehydrogenase (320 aa).

Residues 10–15 (GAGMIG) and Asp34 contribute to the NAD(+) site. Substrate is bound by residues Arg83 and Arg89. NAD(+) contacts are provided by residues Asn96 and 119-121 (ITN). Substrate is bound by residues Asn121 and Arg152. His176 serves as the catalytic Proton acceptor.

Belongs to the LDH/MDH superfamily. MDH type 3 family.

It carries out the reaction (S)-malate + NAD(+) = oxaloacetate + NADH + H(+). Functionally, catalyzes the reversible oxidation of malate to oxaloacetate. This chain is Malate dehydrogenase, found in Caulobacter vibrioides (strain NA1000 / CB15N) (Caulobacter crescentus).